Consider the following 135-residue polypeptide: MPVDFNGYWKMLSNENFEEYLRALDVNVALRKIANLLKPDKEIVQDGDHMIIRTLSTFRNYIMDFQVGKEFEEDLTGIDDRKCMTTVSWDGDKLQCVQKGEKEGRGWTQWIEGDELHLEMRAEGVICKQVFKKVH.

Positions 22–32 (RALDVNVALRK) are important for interaction with STRA6. 3 residues coordinate all-trans-retinol: lysine 41, methionine 63, and glutamine 109.

This sequence belongs to the calycin superfamily. Fatty-acid binding protein (FABP) family. As to quaternary structure, interacts (only as retinol-free apoprotein) with STRA6.

The protein localises to the cytoplasm. It is found in the lipid droplet. Cytoplasmic retinol-binding protein. Accepts retinol from the transport protein STRA6, and thereby contributes to retinol uptake, storage and retinoid homeostasis. The sequence is that of Retinol-binding protein 1 (Rbp1) from Mus musculus (Mouse).